The chain runs to 154 residues: Large ribosomal subunit protein uL22c (154 aa).

This sequence belongs to the universal ribosomal protein uL22 family. As to quaternary structure, part of the 50S ribosomal subunit.

Its subcellular location is the plastid. The protein resides in the chloroplast. Functionally, this protein binds specifically to 23S rRNA. Its function is as follows. The globular domain of the protein is located near the polypeptide exit tunnel on the outside of the subunit, while an extended beta-hairpin is found that lines the wall of the exit tunnel in the center of the 70S ribosome. The protein is Large ribosomal subunit protein uL22c (rpl22) of Guizotia abyssinica (Niger).